The following is a 290-amino-acid chain: Proteasome assembly chaperone 1 (290 aa).

Residues 1–39 (MAATFFGEVVKAPCRAGTEDEEEEEEEEGRRETPEDREV) form a disordered region. Residue Ala2 is modified to N-acetylalanine. At Thr18 the chain carries Phosphothreonine. A compositionally biased stretch (basic and acidic residues) spans 28–39 (EGRRETPEDREV). At Thr56 the chain carries Phosphothreonine. Ser182 carries the post-translational modification Phosphoserine. An N6-acetyllysine modification is found at Lys266.

This sequence belongs to the PSMG1 family. In terms of assembly, forms a heterodimer with PSMG2. The PSMG1-PSMG2 heterodimer interacts directly with the PSMA5 and PSMA7 proteasome alpha subunits. In terms of processing, degraded by the proteasome upon completion of 20S proteasome maturation.

The protein localises to the cytoplasm. The protein resides in the endoplasmic reticulum. Chaperone protein which promotes assembly of the 20S proteasome as part of a heterodimer with PSMG2. The PSMG1-PSMG2 heterodimer binds to the PSMA5 and PSMA7 proteasome subunits, promotes assembly of the proteasome alpha subunits into the heteroheptameric alpha ring and prevents alpha ring dimerization. The protein is Proteasome assembly chaperone 1 (PSMG1) of Papio anubis (Olive baboon).